A 74-amino-acid polypeptide reads, in one-letter code: MRGLCICLVFLLVCGLVSATAAAPAESEVAHLRVRRGFGCPLNQGACHNHCRSIRRRGGYCSGIIKQTCTCYRN.

The first 22 residues, 1 to 22 (MRGLCICLVFLLVCGLVSATAA), serve as a signal peptide directing secretion. The propeptide occupies 23–36 (APAESEVAHLRVRR). Intrachain disulfides connect Cys40–Cys61, Cys47–Cys69, and Cys51–Cys71.

As to expression, hemolymph.

The protein resides in the secreted. In terms of biological role, antibacterial activity against Gram-positive and Gram-negative bacteria. The polypeptide is Defensin (VSNA1) (Dermacentor variabilis (American dog tick)).